The chain runs to 755 residues: MFKRVGLIAGIAGPVAGSSRFSAVSFSKRAFSASSKRCTYEEERAVLDEIQPLLSEKDIDASKKLRNIGISAHIDSGKTTFTERVLYYTGRIKAIHEVRGRDNVGAKMDSMDLEREKGITIQSAATYCSWDKDNESYHFNLIDTPGHIDFTIEVERALRILDGAVLVVCAVSGVQSQTVTVDRQMRRYNVPRVTFINKMDRMGANPFRSIEQINNKLRIPAAAIQVPIGAESELKGVVNIIDRVAIYNEGSNGEKLVTGPVPEDLKDLVEEKRALLIETLADVDDEIAEIFLEEKEPSVDEIKAAIRRATIARKFSPVLMGSALANTGIQNVLDAIVEYLPNPSEVLNTGLDIAKDETKVNLIPSSTQPFVGLAFKLEEGKYGQLTYIRVYQGKMRKGGYITNVKTGKKVKISRLVRMHSNDMEDVDEVGAGEICATFGIDCSSGDTFTDGTLKYSMSSMFVPDAVISLSITPKSKDSTNFSKALNRFQKEDPTFRVRFDPESKETVISGMGELHLEIYVERMRREYNVECVTGKPQVSYRESIQSSAEFDYTHKKQSGGAGQYGRVMGNLSHIENSNTNNFETAIVGGRIPDKYLAACAKGFEEACEKGPLIGHRVLGVNMLINDGAIHAVDSNELAFKTATMAAFRQAFLESQPVILEPIMNVSVTSPNEFQGNVIGLMNKLQAVIQDTENGQDEFTITAECPLNTMFGFATSLRASTQGKGEFSLEFKHYAPASPQLQKQLIADYQKKQQQK.

A mitochondrion-targeting transit peptide spans 1 to 38 (MFKRVGLIAGIAGPVAGSSRFSAVSFSKRAFSASSKRC). In terms of domain architecture, tr-type G spans 63–344 (KKLRNIGISA…AIVEYLPNPS (282 aa)). Residues 72-79 (AHIDSGKT), 143-147 (DTPGH), and 197-200 (NKMD) contribute to the GTP site.

The protein belongs to the TRAFAC class translation factor GTPase superfamily. Classic translation factor GTPase family. EF-G/EF-2 subfamily.

The protein localises to the mitochondrion. It participates in protein biosynthesis; polypeptide chain elongation. In terms of biological role, mitochondrial GTPase that catalyzes the GTP-dependent ribosomal translocation step during translation elongation. During this step, the ribosome changes from the pre-translocational (PRE) to the post-translocational (POST) state as the newly formed A-site-bound peptidyl-tRNA and P-site-bound deacylated tRNA move to the P and E sites, respectively. Catalyzes the coordinated movement of the two tRNA molecules, the mRNA and conformational changes in the ribosome. This Kluyveromyces lactis (strain ATCC 8585 / CBS 2359 / DSM 70799 / NBRC 1267 / NRRL Y-1140 / WM37) (Yeast) protein is Elongation factor G, mitochondrial.